The primary structure comprises 288 residues: 2-methoxy-6-polyprenyl-1,4-benzoquinol methylase, mitochondrial (288 aa).

3 residues coordinate S-adenosyl-L-methionine: Thr-68, Asp-102, and Ser-146. Residues 260 to 270 (PITPTTSSDIP) show a composition bias toward low complexity. The segment at 260-288 (PITPTTSSDIPAQNTSEATCEVKPEPNSA) is disordered. Basic and acidic residues predominate over residues 279-288 (CEVKPEPNSA).

The protein belongs to the class I-like SAM-binding methyltransferase superfamily. MenG/UbiE family. In terms of assembly, component of a multi-subunit COQ enzyme complex.

Its subcellular location is the mitochondrion inner membrane. The enzyme catalyses a 2-methoxy-6-(all-trans-polyprenyl)benzene-1,4-diol + S-adenosyl-L-methionine = a 5-methoxy-2-methyl-3-(all-trans-polyprenyl)benzene-1,4-diol + S-adenosyl-L-homocysteine + H(+). Its pathway is cofactor biosynthesis; ubiquinone biosynthesis. Its function is as follows. Methyltransferase required for the conversion of 2-polyprenyl-6-methoxy-1,4-benzoquinol (DDMQH2) to 2-polyprenyl-3-methyl-6-methoxy-1,4-benzoquinol (DMQH2). This chain is 2-methoxy-6-polyprenyl-1,4-benzoquinol methylase, mitochondrial, found in Leishmania donovani.